Consider the following 417-residue polypeptide: Serine hydroxymethyltransferase (417 aa).

Residues leucine 117 and 121-123 contribute to the (6S)-5,6,7,8-tetrahydrofolate site; that span reads GHL. Residue lysine 226 is modified to N6-(pyridoxal phosphate)lysine.

The protein belongs to the SHMT family. In terms of assembly, homodimer. Requires pyridoxal 5'-phosphate as cofactor.

It is found in the cytoplasm. The enzyme catalyses (6R)-5,10-methylene-5,6,7,8-tetrahydrofolate + glycine + H2O = (6S)-5,6,7,8-tetrahydrofolate + L-serine. Its pathway is one-carbon metabolism; tetrahydrofolate interconversion. The protein operates within amino-acid biosynthesis; glycine biosynthesis; glycine from L-serine: step 1/1. Catalyzes the reversible interconversion of serine and glycine with tetrahydrofolate (THF) serving as the one-carbon carrier. This reaction serves as the major source of one-carbon groups required for the biosynthesis of purines, thymidylate, methionine, and other important biomolecules. Also exhibits THF-independent aldolase activity toward beta-hydroxyamino acids, producing glycine and aldehydes, via a retro-aldol mechanism. The sequence is that of Serine hydroxymethyltransferase from Shouchella clausii (strain KSM-K16) (Alkalihalobacillus clausii).